Reading from the N-terminus, the 1243-residue chain is Probable phospholipid-transporting ATPase 7 (1243 aa).

At M1 to L74 the chain is on the cytoplasmic side. Residues P75–L96 traverse the membrane as a helical segment. The Extracellular portion of the chain corresponds to S97–P100. Residues L101 to K123 traverse the membrane as a helical segment. Residues E124–I305 are Cytoplasmic-facing. The chain crosses the membrane as a helical span at residues I306–M327. Residues T328–H359 are Extracellular-facing. Residues L360–V377 traverse the membrane as a helical segment. Residues S378–A941 lie on the Cytoplasmic side of the membrane. Catalysis depends on D425, which acts as the 4-aspartylphosphate intermediate. A Glycyl lysine isopeptide (Lys-Gly) (interchain with G-Cter in ubiquitin) cross-link involves residue K623. D886 and D890 together coordinate Mg(2+). A helical transmembrane segment spans residues Q942–F961. The Extracellular segment spans residues E962–D975. Residues S976 to V995 form a helical membrane-spanning segment. At F996–R1025 the chain is on the cytoplasmic side. A helical membrane pass occupies residues I1026 to F1048. Residues H1049–D1061 lie on the Extracellular side of the membrane. Residues M1062–T1084 traverse the membrane as a helical segment. The Cytoplasmic portion of the chain corresponds to M1085 to W1090. The chain crosses the membrane as a helical span at residues I1091–G1111. Topologically, residues M1112–T1128 are extracellular. Residues L1129–Y1153 form a helical membrane-spanning segment. The Cytoplasmic segment spans residues I1154–S1243.

This sequence belongs to the cation transport ATPase (P-type) (TC 3.A.3) family. Type IV subfamily.

It localises to the cell membrane. Its subcellular location is the endomembrane system. It catalyses the reaction ATP + H2O + phospholipidSide 1 = ADP + phosphate + phospholipidSide 2.. Functionally, involved in transport of phospholipids and in regulation of pollen plasma membrane lipid asymmetry. This Arabidopsis thaliana (Mouse-ear cress) protein is Probable phospholipid-transporting ATPase 7.